We begin with the raw amino-acid sequence, 1166 residues long: Reverse gyrase 2 (1166 aa).

The RG N-terminal-type zinc-finger motif lies at 1–40; it reads MINVMYKNSCPNCGGDISGDRLLNGLPCEACLPYINGIDD. Residues C10, C13, C28, and C31 each coordinate Zn(2+). ATP is bound by residues Q92 and 109–116; that span reads APTGLGKT. Positions 96 to 285 constitute a Helicase ATP-binding domain; that stretch reads LRRLASNQSF…ALRLLTGFEP (190 aa). A DEAD box motif is present at residues 190 to 193; that stretch reads DDAD. The interval 576–1166 is topoisomerase I; it reads FNISTGLLIV…VNPLKSEQNV (591 aa). A Toprim domain is found at 580 to 743; the sequence is TGLLIVESPT…NVYRVVYHEI (164 aa). A Mg(2+)-binding site is contributed by E586. The RG C-terminal-type zinc finger occupies 662–689; that stretch reads IKKCLDCNKIFSSASDKCPYCGSANLQS. Residues C665, C668, C679, and C682 each contribute to the Zn(2+) site. Residue D712 coordinates Mg(2+). The 399-residue stretch at 759 to 1157 folds into the Topo IA-type catalytic domain; that stretch reads NTNLVMSQIV…EIFSEISTLV (399 aa). Y903 (O-(5'-phospho-DNA)-tyrosine intermediate) is an active-site residue.

The protein in the N-terminal section; belongs to the DEAD box helicase family. DDVD subfamily. This sequence in the C-terminal section; belongs to the type IA topoisomerase family. In terms of assembly, monomer. It depends on Zn(2+) as a cofactor. Requires Mg(2+) as cofactor.

Its subcellular location is the cytoplasm. The catalysed reaction is ATP + H2O = ADP + phosphate + H(+). Its activity is regulated as follows. At least one of the 2 proteins is inhibited by actinomycin D. Less sensitive to NaCl than TopR1, maximal positive supercoiling is observed with 100 mM NaCl; as NaCl rises higher than 400 mM supercoiling decreases. At 600 mM NaCl relaxes but does not introduce positive supercoils into negatively supercoiled substrate. Modifies the topological state of DNA by introducing positive supercoils in an ATP-dependent process. A highly processive enzyme, it introduces a large number of positive supercoils directly in a negatively supercoiled substrate. At 75 degrees Celsius introduces more than 23 positive supercoils into pTZ18R DNA (probably 2860 bp), more than TopR1; unlike TopR1 little to no relaxation of the negatively supercoiled substrate is seen in the presence of ATP, in the absence of ATP no activity is seen. At 45 degrees Celsius the enzyme is slower and in vitro individual steps can be detected. It cleaves transiently a single DNA strand and remains covalently bound to the 5' DNA end through a tyrosine residue. May be involved in DNA damage response. May be involved in rewinding the DNA strands in the regions of the chromosome that have opened up to allow transcription or replication. In terms of biological role, there are 2 genes for this protein in the cell. During exponential growth this is the more highly expressed isoform (about 125 molecules per cell at 80 degrees Celsius, about 117 molecules at 88 degrees Celsius); this isoform is less active at higher temperature. Grows actively at both 80 and 88 degrees Celsius; survives a long exposure at 45 degrees Celsius without DNA replication or cell division occurring. Experiments using whole cell extracts do not distinguish which isoform is present, the results are probably a mixture of the two forms. This chain is Reverse gyrase 2, found in Saccharolobus solfataricus (strain ATCC 35092 / DSM 1617 / JCM 11322 / P2) (Sulfolobus solfataricus).